The primary structure comprises 235 residues: Chaperone protein TorD (235 aa).

Belongs to the TorD/DmsD family. TorD subfamily.

It localises to the cytoplasm. In terms of biological role, involved in the biogenesis of TorA. Acts on TorA before the insertion of the molybdenum cofactor and, as a result, probably favors a conformation of the apoenzyme that is competent for acquiring the cofactor. In Shewanella amazonensis (strain ATCC BAA-1098 / SB2B), this protein is Chaperone protein TorD.